Here is a 430-residue protein sequence, read N- to C-terminus: Enolase (430 aa).

Gln-167 lines the (2R)-2-phosphoglycerate pocket. Glu-209 (proton donor) is an active-site residue. Mg(2+) is bound by residues Asp-246, Glu-289, and Asp-316. Lys-341, Arg-370, Ser-371, and Lys-392 together coordinate (2R)-2-phosphoglycerate. Lys-341 (proton acceptor) is an active-site residue.

Belongs to the enolase family. As to quaternary structure, component of the RNA degradosome, a multiprotein complex involved in RNA processing and mRNA degradation. It depends on Mg(2+) as a cofactor.

The protein resides in the cytoplasm. It is found in the secreted. It localises to the cell surface. The enzyme catalyses (2R)-2-phosphoglycerate = phosphoenolpyruvate + H2O. The protein operates within carbohydrate degradation; glycolysis; pyruvate from D-glyceraldehyde 3-phosphate: step 4/5. In terms of biological role, catalyzes the reversible conversion of 2-phosphoglycerate (2-PG) into phosphoenolpyruvate (PEP). It is essential for the degradation of carbohydrates via glycolysis. This is Enolase from Alteromonas mediterranea (strain DSM 17117 / CIP 110805 / LMG 28347 / Deep ecotype).